A 517-amino-acid chain; its full sequence is T-complex protein 11-like protein 2 (517 aa).

The disordered stretch occupies residues 1–59 (MPFNGEKQYVNEDQQSDSESSRFSESTASLSDYGCSRQSFTSDSSSKSSSPASTSPPRG). A Phosphoserine modification is found at Ser-16. A compositionally biased stretch (low complexity) spans 17–55 (DSESSRFSESTASLSDYGCSRQSFTSDSSSKSSSPASTS).

The protein belongs to the TCP11 family. As to quaternary structure, interacts with FMNL2; this interaction promotes muscle-derived satellite cell (MDSC) migration and differentiation.

It is found in the cytoplasm. The protein resides in the cytoskeleton. Promotes the migration of muscle-derived satellite cells (MDSCs) during differentiation throught interaction with FMNL2 and therefore may participate in microfilament assembly. This chain is T-complex protein 11-like protein 2, found in Rattus norvegicus (Rat).